Reading from the N-terminus, the 811-residue chain is Abnormal pharyngeal pumping eat-20 (811 aa).

A signal peptide spans methionine 1 to alanine 20. Over glutamine 21–tryptophan 749 the chain is Extracellular. N-linked (GlcNAc...) asparagine glycans are attached at residues asparagine 90, asparagine 171, and asparagine 232. EGF-like domains are found at residues proline 220–glutamate 257, leucine 258–glutamate 293, and alanine 301–asparagine 335. Cystine bridges form between cysteine 224–cysteine 235, cysteine 229–cysteine 245, cysteine 247–cysteine 256, cysteine 261–cysteine 272, cysteine 266–cysteine 281, cysteine 283–cysteine 292, cysteine 305–cysteine 314, cysteine 309–cysteine 323, and cysteine 325–cysteine 334. N-linked (GlcNAc...) asparagine glycosylation is present at asparagine 371. Disordered stretches follow at residues phenylalanine 544–threonine 579, phenylalanine 592–threonine 659, and proline 690–serine 739. Residues aspartate 551–glutamate 567 show a composition bias toward acidic residues. The span at proline 570–threonine 579 shows a compositional bias: polar residues. Positions aspartate 597–threonine 612 are enriched in acidic residues. A compositionally biased stretch (low complexity) spans proline 626 to threonine 639. Composition is skewed to acidic residues over residues methionine 640 to glutamate 655 and isoleucine 705 to glutamate 717. Residues isoleucine 750–valine 770 traverse the membrane as a helical segment. At leucine 771–isoleucine 811 the chain is on the cytoplasmic side.

The protein localises to the membrane. Its function is as follows. Regulates pharyngeal pumping during feeding. The protein is Abnormal pharyngeal pumping eat-20 (eat-20) of Caenorhabditis briggsae.